A 206-amino-acid polypeptide reads, in one-letter code: Cytochrome c biogenesis ATP-binding export protein CcmA (206 aa).

Residues 2 to 206 enclose the ABC transporter domain; that stretch reads LEARDVVCIR…IQLTPSEGTP (205 aa). Residue 34-41 coordinates ATP; the sequence is GANGVGKT.

Belongs to the ABC transporter superfamily. CcmA exporter (TC 3.A.1.107) family. In terms of assembly, the complex is composed of two ATP-binding proteins (CcmA) and two transmembrane proteins (CcmB).

It is found in the cell inner membrane. The enzyme catalyses heme b(in) + ATP + H2O = heme b(out) + ADP + phosphate + H(+). Functionally, part of the ABC transporter complex CcmAB involved in the biogenesis of c-type cytochromes; once thought to export heme, this seems not to be the case, but its exact role is uncertain. Responsible for energy coupling to the transport system. The polypeptide is Cytochrome c biogenesis ATP-binding export protein CcmA (Pectobacterium atrosepticum (strain SCRI 1043 / ATCC BAA-672) (Erwinia carotovora subsp. atroseptica)).